Reading from the N-terminus, the 85-residue chain is MAKEELIEMHGLVDEVLPDSRFRVTLDNGHKLVAYTSGKMRKNHIRILAGDQVSLELSPYDLSKGRITFRHIAGRGPGPAPRQSR.

Positions 1–72 (MAKEELIEMH…SKGRITFRHI (72 aa)) constitute an S1-like domain.

It belongs to the IF-1 family. In terms of assembly, component of the 30S ribosomal translation pre-initiation complex which assembles on the 30S ribosome in the order IF-2 and IF-3, IF-1 and N-formylmethionyl-tRNA(fMet); mRNA recruitment can occur at any time during PIC assembly.

It localises to the cytoplasm. Functionally, one of the essential components for the initiation of protein synthesis. Stabilizes the binding of IF-2 and IF-3 on the 30S subunit to which N-formylmethionyl-tRNA(fMet) subsequently binds. Helps modulate mRNA selection, yielding the 30S pre-initiation complex (PIC). Upon addition of the 50S ribosomal subunit IF-1, IF-2 and IF-3 are released leaving the mature 70S translation initiation complex. This Polaromonas naphthalenivorans (strain CJ2) protein is Translation initiation factor IF-1.